We begin with the raw amino-acid sequence, 100 residues long: UPF0251 protein VV2_0946 (100 aa).

This sequence belongs to the UPF0251 family.

This is UPF0251 protein VV2_0946 from Vibrio vulnificus (strain CMCP6).